A 257-amino-acid chain; its full sequence is Probable dihydroorotate dehydrogenase B (NAD(+)), electron transfer subunit (257 aa).

In terms of domain architecture, FAD-binding FR-type spans 2 to 89 (EKPVICRIKE…RGPYGTYFEP (88 aa)). [2Fe-2S] cluster is bound by residues cysteine 208, cysteine 213, cysteine 216, and cysteine 226.

The protein belongs to the PyrK family. In terms of assembly, heterotetramer of 2 PyrK and 2 PyrD type B subunits. Requires [2Fe-2S] cluster as cofactor. FAD serves as cofactor.

It participates in pyrimidine metabolism; UMP biosynthesis via de novo pathway; orotate from (S)-dihydroorotate (NAD(+) route): step 1/1. Functionally, responsible for channeling the electrons from the oxidation of dihydroorotate from the FMN redox center in the PyrD type B subunit to the ultimate electron acceptor NAD(+). The polypeptide is Probable dihydroorotate dehydrogenase B (NAD(+)), electron transfer subunit (Methanocaldococcus jannaschii (strain ATCC 43067 / DSM 2661 / JAL-1 / JCM 10045 / NBRC 100440) (Methanococcus jannaschii)).